We begin with the raw amino-acid sequence, 239 residues long: MSLIIVLVISVLSADAVLSMDNELYLNLEPSQRSSWPVARAVRMQFSKRSEGGRESRKMQGCQILESLNDIAREALRTPRHTTKRISKDEMEFFEGRCLSVGESERTVLGTKWCGAGNEAANYSDLGYFNNVDRCCREHDHCDNIPAGETKYGLKNEGTYTMMNCKCEKAFDKCLSDISGYFTRKAVSAVKFTYFTLYGNGCYNVKCENGRSPSNECPNGVAEYTGETGLGAKVINFGK.

A signal peptide spans 1-19; that stretch reads MSLIIVLVISVLSADAVLS. Positions 20-105 are excised as a propeptide; the sequence is MDNELYLNLE…GRCLSVGESE (86 aa). Residues Trp-113, Gly-115, and Gly-117 each contribute to the Ca(2+) site. 5 disulfides stabilise this stretch: Cys-114–Cys-136, Cys-135–Cys-174, Cys-142–Cys-167, Cys-165–Cys-202, and Cys-207–Cys-217. His-139 is a catalytic residue. Asp-140 is a Ca(2+) binding site. Residues 211 to 213 constitute a propeptide that is removed on maturation; sequence RSP.

It belongs to the phospholipase A2 family. Group III subfamily. In terms of assembly, heterodimer composed of a small subunit and a large subunit; disulfid-linked. Requires Ca(2+) as cofactor. As to expression, expressed by the venom gland.

It is found in the secreted. The catalysed reaction is a 1,2-diacyl-sn-glycero-3-phosphocholine + H2O = a 1-acyl-sn-glycero-3-phosphocholine + a fatty acid + H(+). Its function is as follows. Toxic phospholipase A2, which may catalyze the calcium-dependent hydrolysis of the 2-acyl groups in 3-sn-phosphoglycerides. Inhibits both skeletal (RYR1) and cardiac (RYR2) ryanodine receptors (calcium release channels). Probably blocks ryanodine receptors by generating a lipid product. This chain is Phospholipase A2, found in Hoffmannihadrurus gertschi (Scorpion).